We begin with the raw amino-acid sequence, 417 residues long: Dihydrolipoyllysine-residue succinyltransferase component of 2-oxoglutarate dehydrogenase complex (417 aa).

One can recognise a Lipoyl-binding domain in the interval Met1–Ser76. Lys42 bears the N6-lipoyllysine mark. The interval Ile75–Lys191 is disordered. Composition is skewed to basic and acidic residues over residues Glu89 to Ala103 and Arg152 to Ala163. The Peripheral subunit-binding (PSBD) domain maps to Ile123–Glu160. Positions Ser164–Ser182 are enriched in low complexity. Residues His388 and Asp392 contribute to the active site.

This sequence belongs to the 2-oxoacid dehydrogenase family. In terms of assembly, forms a 24-polypeptide structural core with octahedral symmetry. Part of the 2-oxoglutarate dehydrogenase (OGDH) complex composed of E1 (2-oxoglutarate dehydrogenase), E2 (dihydrolipoamide succinyltransferase) and E3 (dihydrolipoamide dehydrogenase); the complex contains multiple copies of the three enzymatic components (E1, E2 and E3). It depends on (R)-lipoate as a cofactor.

The enzyme catalyses N(6)-[(R)-dihydrolipoyl]-L-lysyl-[protein] + succinyl-CoA = N(6)-[(R)-S(8)-succinyldihydrolipoyl]-L-lysyl-[protein] + CoA. It participates in amino-acid degradation; L-lysine degradation via saccharopine pathway; glutaryl-CoA from L-lysine: step 6/6. In terms of biological role, E2 component of the 2-oxoglutarate dehydrogenase (OGDH) complex which catalyzes the second step in the conversion of 2-oxoglutarate to succinyl-CoA and CO(2). The sequence is that of Dihydrolipoyllysine-residue succinyltransferase component of 2-oxoglutarate dehydrogenase complex (odhB) from Bacillus subtilis (strain 168).